Here is a 186-residue protein sequence, read N- to C-terminus: MGVFHIVVGLGNPGQEYEKTRHNIGWRVVEELVKRQNLSFKIDKKAKSKVAFKEKLVFVLPLTYMNLSGQALSYLLQKEKCSSKDILVILDDISLPLGKLRFRPKGSSGGHKGLESIIEELHTEDIPRLRLGIGPLPEGEQLADYVLKPFLEEEKDKVEEMILKAIQFFECLQKEGIEIALNKLSA.

Tyrosine 17 contributes to the tRNA binding site. Histidine 22 (proton acceptor) is an active-site residue. The tRNA site is built by tyrosine 64 and asparagine 66.

The protein belongs to the PTH family. As to quaternary structure, monomer.

Its subcellular location is the cytoplasm. The catalysed reaction is an N-acyl-L-alpha-aminoacyl-tRNA + H2O = an N-acyl-L-amino acid + a tRNA + H(+). Functionally, hydrolyzes ribosome-free peptidyl-tRNAs (with 1 or more amino acids incorporated), which drop off the ribosome during protein synthesis, or as a result of ribosome stalling. Its function is as follows. Catalyzes the release of premature peptidyl moieties from peptidyl-tRNA molecules trapped in stalled 50S ribosomal subunits, and thus maintains levels of free tRNAs and 50S ribosomes. This Methylacidiphilum infernorum (isolate V4) (Methylokorus infernorum (strain V4)) protein is Peptidyl-tRNA hydrolase.